Consider the following 479-residue polypeptide: Poly(A) polymerase catalytic subunit (479 aa).

Catalysis depends on residues D202 and D204. The Ca(2+) site is built by D202, D204, and D253.

Belongs to the poxviridae poly(A) polymerase catalytic subunit family. In terms of assembly, heterodimer of a large (catalytic) subunit and a small (regulatory) subunit.

It catalyses the reaction RNA(n) + ATP = RNA(n)-3'-adenine ribonucleotide + diphosphate. Functionally, polymerase that creates the 3'-poly(A) tail of mRNA's. The protein is Poly(A) polymerase catalytic subunit (OPG063) of Homo sapiens (Human).